The chain runs to 545 residues: Chaperonin GroEL (545 aa).

Residues 29–32 (TLGP), Lys-50, 86–90 (DGTTT), Gly-413, and Asp-495 contribute to the ATP site.

This sequence belongs to the chaperonin (HSP60) family. In terms of assembly, forms a cylinder of 14 subunits composed of two heptameric rings stacked back-to-back. Interacts with the co-chaperonin GroES.

It is found in the cytoplasm. The enzyme catalyses ATP + H2O + a folded polypeptide = ADP + phosphate + an unfolded polypeptide.. Functionally, together with its co-chaperonin GroES, plays an essential role in assisting protein folding. The GroEL-GroES system forms a nano-cage that allows encapsulation of the non-native substrate proteins and provides a physical environment optimized to promote and accelerate protein folding. The polypeptide is Chaperonin GroEL (Borreliella afzelii (strain PKo) (Borrelia afzelii)).